A 333-amino-acid chain; its full sequence is Beta-ketoacyl-[acyl-carrier-protein] synthase III (333 aa).

Catalysis depends on residues cysteine 116 and histidine 258. The interval 259–263 is ACP-binding; sequence QANQR. Asparagine 288 is an active-site residue.

Belongs to the thiolase-like superfamily. FabH family. As to quaternary structure, homodimer.

The protein localises to the cytoplasm. The enzyme catalyses malonyl-[ACP] + acetyl-CoA + H(+) = 3-oxobutanoyl-[ACP] + CO2 + CoA. It functions in the pathway lipid metabolism; fatty acid biosynthesis. Functionally, catalyzes the condensation reaction of fatty acid synthesis by the addition to an acyl acceptor of two carbons from malonyl-ACP. Catalyzes the first condensation reaction which initiates fatty acid synthesis and may therefore play a role in governing the total rate of fatty acid production. Possesses both acetoacetyl-ACP synthase and acetyl transacylase activities. Its substrate specificity determines the biosynthesis of branched-chain and/or straight-chain of fatty acids. The sequence is that of Beta-ketoacyl-[acyl-carrier-protein] synthase III from Microcystis aeruginosa (strain NIES-843 / IAM M-2473).